Reading from the N-terminus, the 397-residue chain is Imidazolonepropionase (397 aa).

Fe(3+)-binding residues include H66 and H68. Zn(2+)-binding residues include H66 and H68. Residues R75, Y138, and H171 each contribute to the 4-imidazolone-5-propanoate site. Residue Y138 participates in N-formimidoyl-L-glutamate binding. H236 provides a ligand contact to Fe(3+). Residue H236 participates in Zn(2+) binding. Q239 is a 4-imidazolone-5-propanoate binding site. D311 contacts Fe(3+). Position 311 (D311) interacts with Zn(2+). N-formimidoyl-L-glutamate is bound by residues N313 and G315. S316 is a binding site for 4-imidazolone-5-propanoate.

It belongs to the metallo-dependent hydrolases superfamily. HutI family. Zn(2+) is required as a cofactor. The cofactor is Fe(3+).

It localises to the cytoplasm. The enzyme catalyses 4-imidazolone-5-propanoate + H2O = N-formimidoyl-L-glutamate. The protein operates within amino-acid degradation; L-histidine degradation into L-glutamate; N-formimidoyl-L-glutamate from L-histidine: step 3/3. Functionally, catalyzes the hydrolytic cleavage of the carbon-nitrogen bond in imidazolone-5-propanoate to yield N-formimidoyl-L-glutamate. It is the third step in the universal histidine degradation pathway. In Roseobacter denitrificans (strain ATCC 33942 / OCh 114) (Erythrobacter sp. (strain OCh 114)), this protein is Imidazolonepropionase.